Reading from the N-terminus, the 50-residue chain is Mast cell degranulating peptide (50 aa).

The signal sequence occupies residues 1–27 (MISMLRCTFFFVSVILITSYFVTPTMS). K29 carries the post-translational modification N6-formyllysine. A disulfide bridge links C30 with C42. N6-formyllysine occurs at positions 44 and 48. N49 carries the post-translational modification Asparagine amide.

Expressed by the venom gland.

It is found in the secreted. Potent anti-inflammatory agent. At low concentrations, mediates the degranulation of mast cells thus evoking an inflammatory response. Also acts as a neurotoxin capable of blocking a class of voltage-gated potassium channels. In Apis cerana cerana (Oriental honeybee), this protein is Mast cell degranulating peptide.